The primary structure comprises 91 residues: Non-specific lipid-transfer protein 1 (91 aa).

4 cysteine pairs are disulfide-bonded: Cys-3–Cys-50, Cys-13–Cys-27, Cys-28–Cys-73, and Cys-48–Cys-87.

This sequence belongs to the plant LTP family.

Functionally, plant non-specific lipid-transfer proteins transfer phospholipids as well as galactolipids across membranes. May play a role in wax or cutin deposition in the cell walls of expanding epidermal cells and certain secretory tissues. In Prunus persica (Peach), this protein is Non-specific lipid-transfer protein 1.